A 428-amino-acid chain; its full sequence is Kynureninase (428 aa).

Residues threonine 104, threonine 105, phenylalanine 132–aspartate 135, aspartate 213, histidine 216, and tyrosine 238 each bind pyridoxal 5'-phosphate. Residue lysine 239 is modified to N6-(pyridoxal phosphate)lysine. The pyridoxal 5'-phosphate site is built by tryptophan 267 and threonine 295.

The protein belongs to the kynureninase family. In terms of assembly, homodimer. The cofactor is pyridoxal 5'-phosphate.

The catalysed reaction is L-kynurenine + H2O = anthranilate + L-alanine + H(+). The enzyme catalyses 3-hydroxy-L-kynurenine + H2O = 3-hydroxyanthranilate + L-alanine + H(+). Its pathway is amino-acid degradation; L-kynurenine degradation; L-alanine and anthranilate from L-kynurenine: step 1/1. It participates in cofactor biosynthesis; NAD(+) biosynthesis; quinolinate from L-kynurenine: step 2/3. Catalyzes the cleavage of L-kynurenine (L-Kyn) and L-3-hydroxykynurenine (L-3OHKyn) into anthranilic acid (AA) and 3-hydroxyanthranilic acid (3-OHAA), respectively. The chain is Kynureninase from Geobacillus thermodenitrificans (strain NG80-2).